The chain runs to 347 residues: UPF0284 protein LS215_0030 (347 aa).

It belongs to the UPF0284 family.

This chain is UPF0284 protein LS215_0030, found in Saccharolobus islandicus (strain L.S.2.15 / Lassen #1) (Sulfolobus islandicus).